The sequence spans 213 residues: Ribonuclease T (213 aa).

Residues Val28–Phe202 form the Exonuclease domain. Residues Asp31, Glu33, His189, and Asp194 each coordinate Mg(2+). His189 functions as the Proton donor/acceptor in the catalytic mechanism.

This sequence belongs to the RNase T family. As to quaternary structure, homodimer. It depends on Mg(2+) as a cofactor.

Its function is as follows. Trims short 3' overhangs of a variety of RNA species, leaving a one or two nucleotide 3' overhang. Responsible for the end-turnover of tRNA: specifically removes the terminal AMP residue from uncharged tRNA (tRNA-C-C-A). Also appears to be involved in tRNA biosynthesis. The sequence is that of Ribonuclease T from Xanthomonas axonopodis pv. citri (strain 306).